The primary structure comprises 443 residues: ATP-dependent protease ATPase subunit HslU (443 aa).

ATP-binding positions include Ile18, 60 to 65, Asp256, Glu321, and Arg393; that span reads GVGKTE.

The protein belongs to the ClpX chaperone family. HslU subfamily. In terms of assembly, a double ring-shaped homohexamer of HslV is capped on each side by a ring-shaped HslU homohexamer. The assembly of the HslU/HslV complex is dependent on binding of ATP.

The protein localises to the cytoplasm. In terms of biological role, ATPase subunit of a proteasome-like degradation complex; this subunit has chaperone activity. The binding of ATP and its subsequent hydrolysis by HslU are essential for unfolding of protein substrates subsequently hydrolyzed by HslV. HslU recognizes the N-terminal part of its protein substrates and unfolds these before they are guided to HslV for hydrolysis. In Edwardsiella ictaluri (strain 93-146), this protein is ATP-dependent protease ATPase subunit HslU.